The sequence spans 426 residues: Alpha/beta hydrolase pydG (426 aa).

It belongs to the AB hydrolase superfamily. As to quaternary structure, homodimer.

Its pathway is mycotoxin biosynthesis. In terms of biological role, alpha/beta hydrolasee; part of the gene cluster that mediates the biosynthesis of pyrrocidines, fungal natural products containing a macrocyclic para-cyclophane connected to a decahydrofluorene ring system that show potent antibiotic activities toward Gram-negative bacteria. Within the pathway, pydG catalyzes the Knoevenagel condensation that affords the 3-pyrrolin-2-one ring, using as substrate the polyketide-tyrosyl acyl thioester product of pydA. The pathway begins with the PKS-NRPS pydA which, with the help of the trans-enoyl reductase pydC, synthesizes the polyketide-tyrosyl acyl thioester product which can be reductively off-loaded by the terminal reductase (R) domain in pydA. The alpha/beta hydrolase pydG is then required to catalyze the subsequent Knoevenagel condensation that affords the 3-pyrrolin-2-one ring, whereas the four proteins pydB, pydE, pydX and pydZ then function synergistically to form the cyclophane. PydB and the membrane-bound pydX and pydZ are lipid-binding proteins that can sequester and mold the pdyG product into the inverse S-shape. Binding of the medium chain reductase pydE to the complex would trigger the cascade oxidative cyclization. PydY is involved in the Diels-Alder cycloaddition that forms the decahydrofluorene core. Additional non-enzymatic hydroxylation yields pyrrocidine A2 which can be further reduced into pyrrocidine B by an endogenous reductase. The sequence is that of Alpha/beta hydrolase pydG from Acremonium sp.